Here is a 688-residue protein sequence, read N- to C-terminus: Two-component response regulator ORR23 (688 aa).

Residues 25–140 enclose the Response regulatory domain; sequence RVLAVDDDPV…ELRNIWQHVI (116 aa). 4-aspartylphosphate is present on Asp-76. The tract at residues 161-212 is disordered; sequence PPNADSDHVHGHVTCGSPDQSGRPSKKRKEYCSEEEDEGEVNTQDIDDPSAP. The span at 193-208 shows a compositional bias: acidic residues; it reads SEEEDEGEVNTQDIDD. The myb-like GARP DNA-binding region spans 211 to 270; sequence APKKPRVVWSVELHRKFVAAVNQLGIDKAVPKRILELMNVEKLTRENVASHLQKYRLYLK.

Belongs to the ARR family. Type-B subfamily. Two-component system major event consists of a His-to-Asp phosphorelay between a sensor histidine kinase (HK) and a response regulator (RR). In plants, the His-to-Asp phosphorelay involves an additional intermediate named Histidine-containing phosphotransfer protein (HPt). This multistep phosphorelay consists of a His-Asp-His-Asp sequential transfer of a phosphate group between first a His and an Asp of the HK protein, followed by the transfer to a conserved His of the HPt protein and finally the transfer to an Asp in the receiver domain of the RR protein.

The protein localises to the nucleus. Transcriptional activator that binds specific DNA sequence. Functions as a response regulator involved in His-to-Asp phosphorelay signal transduction system. Phosphorylation of the Asp residue in the receiver domain activates the ability of the protein to promote the transcription of target genes. May directly activate some type-A response regulators in response to cytokinins. In Oryza sativa subsp. japonica (Rice), this protein is Two-component response regulator ORR23.